Reading from the N-terminus, the 447-residue chain is uncharacterized protein (447 aa).

Positions V29–A201 constitute an FAD-binding PCMH-type domain.

It belongs to the oxygen-dependent FAD-linked oxidoreductase family. FAD is required as a cofactor.

Its subcellular location is the spore coat. This is an uncharacterized protein from Bacillus subtilis (strain 168).